Reading from the N-terminus, the 342-residue chain is S-adenosylmethionine:tRNA ribosyltransferase-isomerase (342 aa).

The protein belongs to the QueA family. As to quaternary structure, monomer.

Its subcellular location is the cytoplasm. It carries out the reaction 7-aminomethyl-7-carbaguanosine(34) in tRNA + S-adenosyl-L-methionine = epoxyqueuosine(34) in tRNA + adenine + L-methionine + 2 H(+). It functions in the pathway tRNA modification; tRNA-queuosine biosynthesis. Its function is as follows. Transfers and isomerizes the ribose moiety from AdoMet to the 7-aminomethyl group of 7-deazaguanine (preQ1-tRNA) to give epoxyqueuosine (oQ-tRNA). The protein is S-adenosylmethionine:tRNA ribosyltransferase-isomerase of Campylobacter jejuni (strain RM1221).